Consider the following 193-residue polypeptide: Immunogenic protein MPB70 (193 aa).

The signal sequence occupies residues Met1–Ala30. In terms of domain architecture, FAS1 spans Gln57 to Leu189.

Generally found as a monomer; homodimer in culture fluids.

Its subcellular location is the secreted. In Mycobacterium bovis (strain ATCC BAA-935 / AF2122/97), this protein is Immunogenic protein MPB70 (mpb70).